The following is a 197-amino-acid chain: Segregation and condensation protein B (197 aa).

The protein belongs to the ScpB family. In terms of assembly, homodimer. Homodimerization may be required to stabilize the binding of ScpA to the Smc head domains. Component of a cohesin-like complex composed of ScpA, ScpB and the Smc homodimer, in which ScpA and ScpB bind to the head domain of Smc. The presence of the three proteins is required for the association of the complex with DNA.

The protein resides in the cytoplasm. Participates in chromosomal partition during cell division. May act via the formation of a condensin-like complex containing Smc and ScpA that pull DNA away from mid-cell into both cell halves. This Malacoplasma penetrans (strain HF-2) (Mycoplasma penetrans) protein is Segregation and condensation protein B.